The primary structure comprises 681 residues: Cell cycle checkpoint protein RAD17 (681 aa).

Residues 17–25 carry the RAD1-binding motif motif; the sequence is DWVDPSFDD. Residues 42–61 form a disordered region; that stretch reads VNNSSHRRKNGPSTLESSRF. Position 55 is a phosphothreonine (threonine 55). 2 positions are modified to phosphoserine: serine 71 and serine 86. Residue 137–144 participates in ATP binding; it reads GPPGCGKT. Disordered regions lie at residues 344-377 and 606-681; these read SSKGENNLRPRKKGMSLKSDAVLSKSKRRKKPDR and HGMI…SDGT. Phosphoserine is present on serine 359. The tract at residues 432-681 is interaction with MCM7; sequence LVEPEEVVEM…IIEDYESDGT (250 aa). Positions 631–662 are enriched in polar residues; sequence EPTQATVPETWSLPLSQNSASELPASQPQPFS. At threonine 633 the chain carries Phosphothreonine; by ATM. 2 positions are modified to phosphoserine; by ATR and ATM: serine 646 and serine 656. Residues 666–681 are compositionally biased toward acidic residues; sequence DMEENIIIEDYESDGT.

Belongs to the rad17/RAD24 family. Part of a DNA-binding complex containing RFC2, RFC3, RFC4 and RFC5. Interacts with RAD1 and RAD9 within the 9-1-1 (RAD1-RAD9-HUS1) complex. Interacts with RAD9B, POLE, SNU13 and MCM7. DNA damage promotes interaction with ATR or ATM and disrupts interaction with the 9-1-1 (RAD1-RAD9-HUS1) complex. Interacts (when phosphorylated) with NBN; promoting recruitment of the MRN complex to DNA damage sites. Phosphorylation on Ser-646 and Ser-656 is cell cycle-regulated, enhanced by genotoxic stress, and required for activation of checkpoint signaling. Phosphorylation is mediated by ATR upon UV or replication arrest, whereas it may be mediated both by ATR and ATM upon ionizing radiation. Phosphorylation on both sites is required for interaction with RAD1 but dispensable for interaction with RFC3 or RFC4. Phosphorylation at Thr-633 by ATM in response to DNA damage promotes interaction with NBN and recruitment of the MRN complex to DNA damage sites. As to expression, overexpressed in various cancer cell lines and in colon carcinoma (at protein level). Isoform 2 and isoform 3 are the most abundant isoforms in non irradiated cells (at protein level). Ubiquitous at low levels. Highly expressed in testis, where it is expressed within the germinal epithelium of the seminiferous tubuli. Weakly expressed in seminomas (testicular tumors).

It localises to the nucleus. The protein resides in the chromosome. Functionally, essential for sustained cell growth, maintenance of chromosomal stability, and ATR-dependent checkpoint activation upon DNA damage. Has a weak ATPase activity required for binding to chromatin. Participates in the recruitment of the 9-1-1 (RAD1-RAD9-HUS1) complex and RHNO1 onto chromatin, and in CHEK1 activation. Involved in homologous recombination by mediating recruitment of the MRN complex to DNA damage sites. May also serve as a sensor of DNA replication progression. This is Cell cycle checkpoint protein RAD17 from Homo sapiens (Human).